The following is a 296-amino-acid chain: 4-diphosphocytidyl-2-C-methyl-D-erythritol kinase (296 aa).

K11 is a catalytic residue. 96 to 106 contacts ATP; it reads PVSSGLAGGSA. D136 is a catalytic residue.

It belongs to the GHMP kinase family. IspE subfamily.

It catalyses the reaction 4-CDP-2-C-methyl-D-erythritol + ATP = 4-CDP-2-C-methyl-D-erythritol 2-phosphate + ADP + H(+). It participates in isoprenoid biosynthesis; isopentenyl diphosphate biosynthesis via DXP pathway; isopentenyl diphosphate from 1-deoxy-D-xylulose 5-phosphate: step 3/6. Catalyzes the phosphorylation of the position 2 hydroxy group of 4-diphosphocytidyl-2C-methyl-D-erythritol. This Anaplasma phagocytophilum (strain HZ) protein is 4-diphosphocytidyl-2-C-methyl-D-erythritol kinase.